Here is an 89-residue protein sequence, read N- to C-terminus: Small ribosomal subunit protein uS15 (89 aa).

Belongs to the universal ribosomal protein uS15 family. In terms of assembly, part of the 30S ribosomal subunit. Forms a bridge to the 50S subunit in the 70S ribosome, contacting the 23S rRNA.

Functionally, one of the primary rRNA binding proteins, it binds directly to 16S rRNA where it helps nucleate assembly of the platform of the 30S subunit by binding and bridging several RNA helices of the 16S rRNA. Its function is as follows. Forms an intersubunit bridge (bridge B4) with the 23S rRNA of the 50S subunit in the ribosome. The polypeptide is Small ribosomal subunit protein uS15 (Desulfatibacillum aliphaticivorans).